The chain runs to 174 residues: ATP synthase subunit b (174 aa).

A helical transmembrane segment spans residues 15 to 33 (NPGLVIWTLVTFSVVVFVL).

The protein belongs to the ATPase B chain family. In terms of assembly, F-type ATPases have 2 components, F(1) - the catalytic core - and F(0) - the membrane proton channel. F(1) has five subunits: alpha(3), beta(3), gamma(1), delta(1), epsilon(1). F(0) has three main subunits: a(1), b(2) and c(10-14). The alpha and beta chains form an alternating ring which encloses part of the gamma chain. F(1) is attached to F(0) by a central stalk formed by the gamma and epsilon chains, while a peripheral stalk is formed by the delta and b chains.

The protein resides in the cell inner membrane. Its function is as follows. F(1)F(0) ATP synthase produces ATP from ADP in the presence of a proton or sodium gradient. F-type ATPases consist of two structural domains, F(1) containing the extramembraneous catalytic core and F(0) containing the membrane proton channel, linked together by a central stalk and a peripheral stalk. During catalysis, ATP synthesis in the catalytic domain of F(1) is coupled via a rotary mechanism of the central stalk subunits to proton translocation. Functionally, component of the F(0) channel, it forms part of the peripheral stalk, linking F(1) to F(0). This chain is ATP synthase subunit b, found in Leptospira biflexa serovar Patoc (strain Patoc 1 / Ames).